The primary structure comprises 184 residues: dITP/XTP pyrophosphatase (184 aa).

5–10 (SSNRHK) lines the substrate pocket. 2 residues coordinate Mg(2+): Glu33 and Asp62. The active-site Proton acceptor is Asp62. Substrate-binding positions include Ser63, 136 to 139 (WGFD), Lys158, and 163 to 164 (HR).

It belongs to the HAM1 NTPase family. As to quaternary structure, homodimer. The cofactor is Mg(2+).

It catalyses the reaction XTP + H2O = XMP + diphosphate + H(+). It carries out the reaction dITP + H2O = dIMP + diphosphate + H(+). The catalysed reaction is ITP + H2O = IMP + diphosphate + H(+). Its function is as follows. Pyrophosphatase that catalyzes the hydrolysis of nucleoside triphosphates to their monophosphate derivatives, with a high preference for the non-canonical purine nucleotides XTP (xanthosine triphosphate), dITP (deoxyinosine triphosphate) and ITP. Seems to function as a house-cleaning enzyme that removes non-canonical purine nucleotides from the nucleotide pool, thus preventing their incorporation into DNA/RNA and avoiding chromosomal lesions. This is dITP/XTP pyrophosphatase from Korarchaeum cryptofilum (strain OPF8).